Consider the following 196-residue polypeptide: RACSCSPVHPQQAFCNADVVIRAKAVSEKEVDSGNDIYGNPIKRIQYEIKQIKMFKGPDKDIEFIYTAPSSAVCGVSLDVGGKKEYLIAGKAEGDGKMHITLCDFIVPWDTLSTTQKKSLNHRYQMGCECKITRCPMIPCYISSPDECLWMDWVTEKSINGHQAKFFACIKRSDGSCAWYRGAAPPKQEFLDIEDP.

Residues 1-2 (RA) form the signal peptide. Cysteine 3 contributes to the Zn(2+) binding site. 2 involved in metalloproteinase-binding regions span residues 3 to 6 (CSCS) and 71 to 72 (SA). 6 disulfide bridges follow: cysteine 3-cysteine 74, cysteine 5-cysteine 103, cysteine 15-cysteine 128, cysteine 130-cysteine 177, cysteine 135-cysteine 140, and cysteine 148-cysteine 169. One can recognise an NTR domain in the interval 3-128 (CSCSPVHPQQ…SLNHRYQMGC (126 aa)).

It belongs to the protease inhibitor I35 (TIMP) family. As to quaternary structure, interacts (via the C-terminal) with MMP2 (via the C-terminal PEX domain); the interaction inhibits the MMP2 activity. The activity of TIMP2 is dependent on the presence of disulfide bonds.

The protein resides in the secreted. Its function is as follows. Complexes with metalloproteinases (such as collagenases) and irreversibly inactivates them by binding to their catalytic zinc cofactor. This Cricetulus longicaudatus (Long-tailed dwarf hamster) protein is Metalloproteinase inhibitor 2 (TIMP2).